The primary structure comprises 457 residues: Toxin and drug export protein A (457 aa).

The first 23 residues, 1–23, serve as a signal peptide directing secretion; sequence MFTIKKLTLTIVVATTLTGCANI.

Belongs to the outer membrane factor (OMF) (TC 1.B.17) family. Homotrimer. Probably part of a complex composed of LtxB, LtxD and TdeA, which forms a single transport channel across the two membranes.

It is found in the cell outer membrane. Its function is as follows. Required for secretion of the LtxA leukotoxin and resistance to various antimicrobial compounds. The sequence is that of Toxin and drug export protein A from Aggregatibacter actinomycetemcomitans (Actinobacillus actinomycetemcomitans).